Reading from the N-terminus, the 961-residue chain is Alanine--tRNA ligase, chloroplastic/mitochondrial (961 aa).

Residues His-641, His-645, Cys-743, and His-747 each coordinate Zn(2+).

Belongs to the class-II aminoacyl-tRNA synthetase family. Monomer. Requires Zn(2+) as cofactor.

The protein resides in the plastid. It is found in the chloroplast. Its subcellular location is the mitochondrion. The enzyme catalyses tRNA(Ala) + L-alanine + ATP = L-alanyl-tRNA(Ala) + AMP + diphosphate. Its function is as follows. Catalyzes the attachment of alanine to tRNA(Ala) in a two-step reaction: alanine is first activated by ATP to form Ala-AMP and then transferred to the acceptor end of tRNA(Ala). Also edits incorrectly charged tRNA(Ala) via its editing domain. The protein is Alanine--tRNA ligase, chloroplastic/mitochondrial of Sorghum bicolor (Sorghum).